The primary structure comprises 619 residues: Dihydroxy-acid dehydratase (619 aa).

Asp-81 is a binding site for Mg(2+). Cys-122 lines the [2Fe-2S] cluster pocket. Mg(2+) is bound by residues Asp-123 and Lys-124. N6-carboxylysine is present on Lys-124. Cys-195 serves as a coordination point for [2Fe-2S] cluster. A Mg(2+)-binding site is contributed by Glu-494. Ser-520 (proton acceptor) is an active-site residue.

The protein belongs to the IlvD/Edd family. As to quaternary structure, homodimer. Requires [2Fe-2S] cluster as cofactor. Mg(2+) serves as cofactor.

The enzyme catalyses (2R)-2,3-dihydroxy-3-methylbutanoate = 3-methyl-2-oxobutanoate + H2O. The catalysed reaction is (2R,3R)-2,3-dihydroxy-3-methylpentanoate = (S)-3-methyl-2-oxopentanoate + H2O. It functions in the pathway amino-acid biosynthesis; L-isoleucine biosynthesis; L-isoleucine from 2-oxobutanoate: step 3/4. The protein operates within amino-acid biosynthesis; L-valine biosynthesis; L-valine from pyruvate: step 3/4. Functions in the biosynthesis of branched-chain amino acids. Catalyzes the dehydration of (2R,3R)-2,3-dihydroxy-3-methylpentanoate (2,3-dihydroxy-3-methylvalerate) into 2-oxo-3-methylpentanoate (2-oxo-3-methylvalerate) and of (2R)-2,3-dihydroxy-3-methylbutanoate (2,3-dihydroxyisovalerate) into 2-oxo-3-methylbutanoate (2-oxoisovalerate), the penultimate precursor to L-isoleucine and L-valine, respectively. The chain is Dihydroxy-acid dehydratase from Shewanella oneidensis (strain ATCC 700550 / JCM 31522 / CIP 106686 / LMG 19005 / NCIMB 14063 / MR-1).